Consider the following 891-residue polypeptide: DNA mismatch repair protein MutS (891 aa).

634–641 (GPNMGGKS) contacts ATP.

The protein belongs to the DNA mismatch repair MutS family.

Functionally, this protein is involved in the repair of mismatches in DNA. It is possible that it carries out the mismatch recognition step. This protein has a weak ATPase activity. This is DNA mismatch repair protein MutS from Burkholderia pseudomallei (strain 1106a).